The primary structure comprises 64 residues: UPF0434 protein BOV_A0835 (64 aa).

This sequence belongs to the UPF0434 family.

The polypeptide is UPF0434 protein BOV_A0835 (Brucella ovis (strain ATCC 25840 / 63/290 / NCTC 10512)).